The following is a 137-amino-acid chain: Ribosome-binding factor A (137 aa).

This sequence belongs to the RbfA family. Monomer. Binds 30S ribosomal subunits, but not 50S ribosomal subunits or 70S ribosomes.

The protein localises to the cytoplasm. In terms of biological role, one of several proteins that assist in the late maturation steps of the functional core of the 30S ribosomal subunit. Associates with free 30S ribosomal subunits (but not with 30S subunits that are part of 70S ribosomes or polysomes). Required for efficient processing of 16S rRNA. May interact with the 5'-terminal helix region of 16S rRNA. This chain is Ribosome-binding factor A, found in Cereibacter sphaeroides (strain ATCC 17029 / ATH 2.4.9) (Rhodobacter sphaeroides).